The following is a 397-amino-acid chain: 1-deoxy-D-xylulose 5-phosphate reductoisomerase (397 aa).

Positions 12, 13, 14, 15, 38, 39, 40, and 126 each coordinate NADPH. Lysine 127 contacts 1-deoxy-D-xylulose 5-phosphate. NADPH is bound at residue glutamate 128. Aspartate 152 serves as a coordination point for Mn(2+). Residues serine 153, glutamate 154, serine 188, and histidine 211 each contribute to the 1-deoxy-D-xylulose 5-phosphate site. Position 154 (glutamate 154) interacts with Mn(2+). An NADPH-binding site is contributed by glycine 217. Residues serine 224, asparagine 229, lysine 230, and glutamate 233 each coordinate 1-deoxy-D-xylulose 5-phosphate. Glutamate 233 is a Mn(2+) binding site.

The protein belongs to the DXR family. Mg(2+) is required as a cofactor. It depends on Mn(2+) as a cofactor.

It carries out the reaction 2-C-methyl-D-erythritol 4-phosphate + NADP(+) = 1-deoxy-D-xylulose 5-phosphate + NADPH + H(+). It functions in the pathway isoprenoid biosynthesis; isopentenyl diphosphate biosynthesis via DXP pathway; isopentenyl diphosphate from 1-deoxy-D-xylulose 5-phosphate: step 1/6. Functionally, catalyzes the NADPH-dependent rearrangement and reduction of 1-deoxy-D-xylulose-5-phosphate (DXP) to 2-C-methyl-D-erythritol 4-phosphate (MEP). The polypeptide is 1-deoxy-D-xylulose 5-phosphate reductoisomerase (Haemophilus influenzae (strain PittGG)).